Reading from the N-terminus, the 499-residue chain is Glycerol kinase (499 aa).

Residue Thr-13 participates in ADP binding. Residues Thr-13, Thr-14, and Ser-15 each coordinate ATP. Thr-13 is a binding site for sn-glycerol 3-phosphate. Arg-17 contributes to the ADP binding site. Sn-glycerol 3-phosphate contacts are provided by Arg-83, Glu-84, Tyr-136, and Asp-246. 5 residues coordinate glycerol: Arg-83, Glu-84, Tyr-136, Asp-246, and Gln-247. Residues Thr-268 and Gly-311 each coordinate ADP. ATP-binding residues include Thr-268, Gly-311, Gln-315, and Gly-412. Residues Gly-412 and Asn-416 each coordinate ADP.

It belongs to the FGGY kinase family.

It carries out the reaction glycerol + ATP = sn-glycerol 3-phosphate + ADP + H(+). The protein operates within polyol metabolism; glycerol degradation via glycerol kinase pathway; sn-glycerol 3-phosphate from glycerol: step 1/1. With respect to regulation, inhibited by fructose 1,6-bisphosphate (FBP). In terms of biological role, key enzyme in the regulation of glycerol uptake and metabolism. Catalyzes the phosphorylation of glycerol to yield sn-glycerol 3-phosphate. The protein is Glycerol kinase of Francisella philomiragia subsp. philomiragia (strain ATCC 25017 / CCUG 19701 / FSC 153 / O#319-036).